Here is a 323-residue protein sequence, read N- to C-terminus: Glyoxylate/hydroxypyruvate reductase B (323 aa).

The segment at 37 to 62 is disordered; the sequence is AEHGGAGARRRHDRLQQHGGSSAAGE. Active-site residues include R236 and E265. Residue H284 is the Proton donor of the active site.

It belongs to the D-isomer specific 2-hydroxyacid dehydrogenase family. GhrB subfamily. In terms of assembly, homodimer.

Its subcellular location is the cytoplasm. The catalysed reaction is glycolate + NADP(+) = glyoxylate + NADPH + H(+). It carries out the reaction (R)-glycerate + NAD(+) = 3-hydroxypyruvate + NADH + H(+). The enzyme catalyses (R)-glycerate + NADP(+) = 3-hydroxypyruvate + NADPH + H(+). Functionally, catalyzes the NADPH-dependent reduction of glyoxylate and hydroxypyruvate into glycolate and glycerate, respectively. This chain is Glyoxylate/hydroxypyruvate reductase B (tkrA), found in Enterobacter agglomerans (Erwinia herbicola).